Consider the following 560-residue polypeptide: Diphtheria toxin (560 aa).

The first 25 residues, 1 to 25 (MSRKLFASILIGALLGIGAPPSAHA), serve as a signal peptide directing secretion. Residues H46 and Y90 each coordinate NAD(+). E173 is a catalytic residue. 2 cysteine pairs are disulfide-bonded: C211–C226 and C486–C496.

Homodimer.

The enzyme catalyses diphthamide-[translation elongation factor 2] + NAD(+) = N-(ADP-D-ribosyl)diphthamide-[translation elongation factor 2] + nicotinamide + H(+). Diphtheria toxin, produced by a phage infecting Corynebacterium diphtheriae, is a proenzyme that, after activation, catalyzes the covalent attachment of the ADP ribose moiety of NAD to elongation factor 2. Fragment A is responsible for enzymatic ADP-ribosylation of elongation factor 2, while fragment B is responsible for binding of toxin to cell receptors and entry of fragment A. The protein is Diphtheria toxin of Corynephage omega.